An 863-amino-acid polypeptide reads, in one-letter code: Leucine--tRNA ligase (863 aa).

A 'HIGH' region motif is present at residues 42-52; sequence PYPSGRLHMGH. The 'KMSKS' region motif lies at 622-626; it reads KMSKS. K625 serves as a coordination point for ATP.

It belongs to the class-I aminoacyl-tRNA synthetase family.

Its subcellular location is the cytoplasm. It carries out the reaction tRNA(Leu) + L-leucine + ATP = L-leucyl-tRNA(Leu) + AMP + diphosphate. The polypeptide is Leucine--tRNA ligase (Shewanella sediminis (strain HAW-EB3)).